A 273-amino-acid polypeptide reads, in one-letter code: NADPH-dependent 7-cyano-7-deazaguanine reductase (273 aa).

80–82 (IES) lines the substrate pocket. 82–83 (SK) is an NADPH binding site. C180 acts as the Thioimide intermediate in catalysis. The Proton donor role is filled by D187. 219–220 (HE) contacts substrate. NADPH is bound at residue 248-249 (RG).

This sequence belongs to the GTP cyclohydrolase I family. QueF type 2 subfamily. Homodimer.

It localises to the cytoplasm. It catalyses the reaction 7-aminomethyl-7-carbaguanine + 2 NADP(+) = 7-cyano-7-deazaguanine + 2 NADPH + 3 H(+). The protein operates within tRNA modification; tRNA-queuosine biosynthesis. Functionally, catalyzes the NADPH-dependent reduction of 7-cyano-7-deazaguanine (preQ0) to 7-aminomethyl-7-deazaguanine (preQ1). This chain is NADPH-dependent 7-cyano-7-deazaguanine reductase, found in Bordetella avium (strain 197N).